Reading from the N-terminus, the 447-residue chain is N-succinylarginine dihydrolase (447 aa).

Substrate contacts are provided by residues 19–28 (AGLSVGNKAS), Asn110, and 137–138 (HR). Residue Glu174 is part of the active site. A substrate-binding site is contributed by Arg213. The active site involves His249. Substrate-binding residues include Asp251 and Asn365. Cys371 serves as the catalytic Nucleophile.

The protein belongs to the succinylarginine dihydrolase family. As to quaternary structure, homodimer.

The catalysed reaction is N(2)-succinyl-L-arginine + 2 H2O + 2 H(+) = N(2)-succinyl-L-ornithine + 2 NH4(+) + CO2. It functions in the pathway amino-acid degradation; L-arginine degradation via AST pathway; L-glutamate and succinate from L-arginine: step 2/5. Its function is as follows. Catalyzes the hydrolysis of N(2)-succinylarginine into N(2)-succinylornithine, ammonia and CO(2). The chain is N-succinylarginine dihydrolase from Photorhabdus laumondii subsp. laumondii (strain DSM 15139 / CIP 105565 / TT01) (Photorhabdus luminescens subsp. laumondii).